A 628-amino-acid polypeptide reads, in one-letter code: FAD-linked oxidoreductase hmp9 (628 aa).

A signal peptide spans 1-29; that stretch reads MFCIIRAQLLLLLHLLVLALLLVGTVCNA. Residues 34-53 form a disordered region; it reads GHPSELEPLALKRGGSPRDD. Residues Asn80 and Asn133 are each glycosylated (N-linked (GlcNAc...) asparagine). The FAD-binding PCMH-type domain maps to 152 to 337; that stretch reads LGQLPVYAID…LKTKIKAYPN (186 aa). N-linked (GlcNAc...) asparagine glycosylation is present at Asn356.

The protein belongs to the oxygen-dependent FAD-linked oxidoreductase family.

It participates in secondary metabolite biosynthesis. Its function is as follows. FAD-linked oxidoreductase; part of the gene cluster that mediates the biosynthesis of hypothemycin, a resorcylic acid lactone (RAL) that irreversibly inhibits a subset of protein kinases with a conserved cysteine in the ATP binding site such as human ERK2. The first step is performed by both PKSs hmp3 and hmp8 and leads to the production of 7',8'-dehydrozearalenol (DHZ). The highly reducing PKS hpm8 synthesizes the reduced hexaketide (7S,11S,2E,8E)-7,11-dihydroxy-dodeca-2,8-dienoate, which is transferred downstream to the non-reducing PKS hpm3. Hpm3 then extends the reduced hexaketide to a nonaketide, after which regioselective cyclization and macrolactonization affords DHZ. The next step is the conversion of DHZ into aigialomycin C and is performed by the O-methyltransferase hmp5, the FAD-binding monooxygenase hmp7, and the cytochrome P450 monooxygenase hmp1. The wide substrate tolerance of the hmp5 and hmp7 implies that the reactions from DHZ to aigialomycin C can occur in any order. The steps from aigialomycin C to hypothemycin are less well established. The FAD-linked oxidoreductase hmp9 presumably catalyzes oxidation of the C-6' hydroxyl to a ketone. The timing of this oxidation is important, since the resulting enone functional group is a Michael acceptor that can react spontaneously with glutathione, an abundant metabolite in fungal cells. The glutathione S-transferase hmp2 catalyzes cis-trans isomerization of the 7',8' double bond with equilibrium favoring the trans isomer. The hpm6-encoded transporter might preferentially pump hypothemycin out of the cell relative to the trans isomer aigialomycin A. The cis-to-trans isomerization may be coupled with C-4' hydroxylation, since all known hypothemycin analogs containing the enone functional group also have hydroxyl groups at both C-4' and C-5'. The sequence is that of FAD-linked oxidoreductase hmp9 from Hypomyces subiculosus (Nectria subiculosa).